A 1237-amino-acid polypeptide reads, in one-letter code: METRTAENTAIFMCKCCNLFSPNQSELVTHVSEKHGEEGVNVDDVIIPLRPLNTPENPNPSKGGDEFLVMKRKRGRPKGSTKKPSTEEEVVENLVSPSEDGPLATEEGSRLAPSSLECSKCCRKFSNTRQLRKHICIIVLNLGEEDGDAGNESDLDLEKTYKEDDREKASKRPRAQKTEKVQKISGKEAGQLSGAKKPIISVVLTAHEAIPGATKIIPVEAGPPETGAPPPETTAADLVPRRGYQEYAIQQTPYEQPMKSSRLGPTQLKIFTCEYCNKVFKFKHSLQAHLRIHTNEKPYKCSQCSYASAIKANLNVHLRKHTGEKFACDYCSFTCLSKGHLKVHIERVHKKIKQHCRFCKKKYSDVKNLIKHIRDMHDPQDKKVKEALDELRLMTREGKRQLLYDCHICERKFKNELDRDRHMLVHGDKWPFACELCGHGATKYQALELHVRKHPFVYVCALCLKKFVSSIRLRSHIREVHGAAQETLVFTSSINQSFCLLEPGGDIQQEALGDQLQLAAEEFVCPEIDVRKEEACPGEAQPEVGLRELVVPGDAHAPPPGPLATPQSESSSLSPCKLETTVVSSDLNSLGVVSDDFLLKSDTSSAEPPAAAEATSDTQHRDSAQTQGEEVTLLLAKAKSAGPDPESSPGGRQKVGALPASESDSSTCLRANPTEASDLLPTVTDGGDLGVCQPDSCTPSSEHHPGSTAFMKVLDSLQKKQMNTSLCERIRKVYGDLECEYCGKLFWYQVHFDMHVRTHTREHLYYCSQCHYSSITKNCLKRHVIQKHSNILLKCPTDGCDYSTPDKYKLQAHLKVHTELDKRSYSCPVCEKSFSEDRLIKSHIKTNHPEVSMNTISEVLGRRVQLKGLIGKRAMKCPYCDFYFMKNGSDLQRHIWAHEGVKPFKCSLCEYATRSKSNLKAHMNRHSTEKTHLCDMCGKKFKSKGTLKSHKLLHTSDGKQFKCTVCDYTAAQKPQLLRHMEQHASFKPFRCAHCHYSCNISGSLKRHYNRKHPNEEYTNVGSGELAAEALIQQGGLKCPVCSFVYGTKWEFNRHLKNKHGLKVVEIDGDPKWEPAAETPEEPSTQYLYITEAEDVQGTQAAVAALQDLRYTSESGDRLDPTAVNILQQIIELGSETHDAAAVASVVAMAPGTVTVVKQVTDEEPSSNHTVMIQETLQQASVELAEQHHLVVSSDDVEGIETVTVYTQGGEASEFIVYVQEAVQPVEEQVGEQPAPEL.

The C2H2-type 1 zinc-finger motif lies at 12 to 35 (FMCKCCNLFSPNQSELVTHVSEKH). The interval 50–110 (RPLNTPENPN…GPLATEEGSR (61 aa)) is disordered. Over residues 70-81 (MKRKRGRPKGST) the composition is skewed to basic residues. The segment at 116–141 (LECSKCCRKFSNTRQLRKHICIIVLN) adopts a C2H2-type 2; degenerate zinc-finger fold. The interval 147 to 188 (GDAGNESDLDLEKTYKEDDREKASKRPRAQKTEKVQKISGKE) is disordered. Over residues 156-186 (DLEKTYKEDDREKASKRPRAQKTEKVQKISG) the composition is skewed to basic and acidic residues. 7 C2H2-type zinc fingers span residues 271–293 (FTCE…LRIH), 299–321 (YKCS…LRKH), 326–349 (FACD…ERVH), 354–377 (QHCR…RDMH), 404–426 (YDCH…MLVH), 432–454 (FACE…VRKH), and 458–481 (YVCA…REVH). Residues Cys-273, Cys-276, His-289, His-293, Cys-301, Cys-304, His-317, His-321, Cys-328, Cys-331, His-344, His-349, Cys-356, Cys-359, His-372, His-377, Cys-406, Cys-409, His-422, and His-426 each contribute to the Zn(2+) site. Zn(2+) contacts are provided by Cys-460, Cys-463, His-476, and His-481. 2 disordered regions span residues 551–576 (VPGD…LSPC) and 601–671 (SDTS…CLRA). A compositionally biased stretch (polar residues) spans 565-574 (TPQSESSSLS). Positions 601–617 (SDTSSAEPPAAAEATSD) are enriched in low complexity. 4 consecutive C2H2-type zinc fingers follow at residues 737 to 759 (LECE…VRTH), 765 to 788 (YYCS…IQKH), 793 to 817 (LKCP…LKVH), and 825 to 848 (YSCP…KTNH). Zn(2+) contacts are provided by Cys-767, Cys-770, His-783, His-788, Cys-795, Cys-800, His-813, His-817, Cys-827, Cys-830, His-843, His-848, Cys-877, Cys-880, His-894, His-898, Cys-906, Cys-909, His-922, His-926, Cys-934, Cys-937, His-950, and Leu-953. The C2H2-type 14; degenerate zinc-finger motif lies at 875 to 898 (MKCPYCDFYFMKNGSDLQRHIWAH). 5 consecutive C2H2-type zinc fingers follow at residues 904-926 (FKCS…MNRH), 932-954 (HLCD…KLLH), 961-983 (FKCT…MEQH), 989-1012 (FRCA…NRKH), and 1036-1059 (LKCP…KNKH).

In terms of tissue distribution, detected in spleen and thymus but not in liver, muscle, heart, kidney, brain, bone marrow or pancreas. Expressed in CD19+, CD4+ and CD8+ lymphocytes but not in CD11b+ lymphocytes or peritoneal macrophages (at protein level).

The protein resides in the nucleus. The protein localises to the cytoplasm. It localises to the cytosol. Functionally, may be involved in transcriptional regulation. Overexpression causes down-regulation of a number of genes involved in the immune response. Some genes are also up-regulated. This Mus musculus (Mouse) protein is Zinc finger protein ZFAT (Zfat).